A 334-amino-acid chain; its full sequence is Photosystem II assembly protein Ycf48 (334 aa).

An N-terminal signal peptide occupies residues 1 to 22; the sequence is MAKMLKLWRLVLLAAFSLLLMA.

Belongs to the Ycf48 family. Part of early PSII assembly complexes which includes D1 (psbA) and PsbI; not found in mature PSII. Binds to the lumenal side of PSII complexes. Interacts with YidC.

The protein localises to the cellular thylakoid lumen. Its function is as follows. A factor required for optimal assembly of photosystem II (PSII), acting in the early stages of PSII assembly. Also plays a role in replacement of photodamaged D1 (psbA). Assists YidC in synthesis of chlorophyll-binding proteins. In Synechococcus sp. (strain JA-3-3Ab) (Cyanobacteria bacterium Yellowstone A-Prime), this protein is Photosystem II assembly protein Ycf48.